The chain runs to 689 residues: DNA topoisomerase 1 (689 aa).

The Toprim domain maps to Asp-3–Ile-113. Mg(2+)-binding residues include Glu-9 and Asp-82. The Topo IA-type catalytic domain occupies Glu-129–Glu-557. An interaction with DNA region spans residues Ser-163–Gln-168. Tyr-298 functions as the O-(5'-phospho-DNA)-tyrosine intermediate in the catalytic mechanism. C4-type zinc fingers lie at residues Cys-577–Cys-603, Cys-617–Cys-645, and Cys-658–Cys-681.

This sequence belongs to the type IA topoisomerase family. As to quaternary structure, monomer. Mg(2+) is required as a cofactor.

It catalyses the reaction ATP-independent breakage of single-stranded DNA, followed by passage and rejoining.. Releases the supercoiling and torsional tension of DNA, which is introduced during the DNA replication and transcription, by transiently cleaving and rejoining one strand of the DNA duplex. Introduces a single-strand break via transesterification at a target site in duplex DNA. The scissile phosphodiester is attacked by the catalytic tyrosine of the enzyme, resulting in the formation of a DNA-(5'-phosphotyrosyl)-enzyme intermediate and the expulsion of a 3'-OH DNA strand. The free DNA strand then undergoes passage around the unbroken strand, thus removing DNA supercoils. Finally, in the religation step, the DNA 3'-OH attacks the covalent intermediate to expel the active-site tyrosine and restore the DNA phosphodiester backbone. In Staphylococcus epidermidis (strain ATCC 35984 / DSM 28319 / BCRC 17069 / CCUG 31568 / BM 3577 / RP62A), this protein is DNA topoisomerase 1.